Here is a 348-residue protein sequence, read N- to C-terminus: 4-hydroxy-3-methylbut-2-enyl diphosphate reductase (348 aa).

C21 serves as a coordination point for [4Fe-4S] cluster. (2E)-4-hydroxy-3-methylbut-2-enyl diphosphate is bound by residues H50 and H86. The dimethylallyl diphosphate site is built by H50 and H86. Isopentenyl diphosphate is bound by residues H50 and H86. C108 provides a ligand contact to [4Fe-4S] cluster. H136 lines the (2E)-4-hydroxy-3-methylbut-2-enyl diphosphate pocket. H136 is a binding site for dimethylallyl diphosphate. Position 136 (H136) interacts with isopentenyl diphosphate. E138 functions as the Proton donor in the catalytic mechanism. Residue T177 coordinates (2E)-4-hydroxy-3-methylbut-2-enyl diphosphate. C207 contacts [4Fe-4S] cluster. Residues S235, S236, N237, and S280 each contribute to the (2E)-4-hydroxy-3-methylbut-2-enyl diphosphate site. Dimethylallyl diphosphate contacts are provided by S235, S236, N237, and S280. The isopentenyl diphosphate site is built by S235, S236, N237, and S280.

It belongs to the IspH family. [4Fe-4S] cluster serves as cofactor.

The catalysed reaction is isopentenyl diphosphate + 2 oxidized [2Fe-2S]-[ferredoxin] + H2O = (2E)-4-hydroxy-3-methylbut-2-enyl diphosphate + 2 reduced [2Fe-2S]-[ferredoxin] + 2 H(+). It catalyses the reaction dimethylallyl diphosphate + 2 oxidized [2Fe-2S]-[ferredoxin] + H2O = (2E)-4-hydroxy-3-methylbut-2-enyl diphosphate + 2 reduced [2Fe-2S]-[ferredoxin] + 2 H(+). Its pathway is isoprenoid biosynthesis; dimethylallyl diphosphate biosynthesis; dimethylallyl diphosphate from (2E)-4-hydroxy-3-methylbutenyl diphosphate: step 1/1. It participates in isoprenoid biosynthesis; isopentenyl diphosphate biosynthesis via DXP pathway; isopentenyl diphosphate from 1-deoxy-D-xylulose 5-phosphate: step 6/6. Its function is as follows. Catalyzes the conversion of 1-hydroxy-2-methyl-2-(E)-butenyl 4-diphosphate (HMBPP) into a mixture of isopentenyl diphosphate (IPP) and dimethylallyl diphosphate (DMAPP). Acts in the terminal step of the DOXP/MEP pathway for isoprenoid precursor biosynthesis. This is 4-hydroxy-3-methylbut-2-enyl diphosphate reductase from Agrobacterium fabrum (strain C58 / ATCC 33970) (Agrobacterium tumefaciens (strain C58)).